A 107-amino-acid chain; its full sequence is YcgL domain-containing protein Psyc_0800 (107 aa).

A YcgL domain is found at 1–95; it reads MHCDIYKFLK…QDVMRRQAEL (95 aa).

The polypeptide is YcgL domain-containing protein Psyc_0800 (Psychrobacter arcticus (strain DSM 17307 / VKM B-2377 / 273-4)).